A 443-amino-acid polypeptide reads, in one-letter code: Alpha-amylase (443 aa).

Residues 1 to 24 form the signal peptide; sequence MHNTLFRTALLAAALGSFSHTASA. His114 and Arg196 together coordinate substrate. Asp198 functions as the Nucleophile in the catalytic mechanism. Residue 201-202 participates in substrate binding; the sequence is KH. Residue Glu223 is the Proton donor of the active site. 2 residues coordinate substrate: Gly228 and His287.

It belongs to the glycosyl hydrolase 13 family.

It localises to the secreted. It catalyses the reaction Endohydrolysis of (1-&gt;4)-alpha-D-glucosidic linkages in polysaccharides containing three or more (1-&gt;4)-alpha-linked D-glucose units.. The sequence is that of Alpha-amylase (amyA) from Aeromonas hydrophila.